The chain runs to 72 residues: Aurein-2.3 (72 aa).

Residues 1 to 22 form the signal peptide; sequence MAFLKKSLFLVLFLGLVSLSIC. A propeptide spanning residues 23 to 49 is cleaved from the precursor; the sequence is EKEKRQNGEDEDENEAANHEEGSEEKR. A disordered region spans residues 27 to 47; it reads RQNGEDEDENEAANHEEGSEE. The segment covering 38-47 has biased composition (basic and acidic residues); that stretch reads AANHEEGSEE. Position 65 is a leucine amide (Leu65). A propeptide spanning residues 69 to 72 is cleaved from the precursor; that stretch reads NDVE.

Amidation is essential for antibacterial activity against Gram-positive bacteria. In terms of tissue distribution, expressed by the skin dorsal glands.

The protein localises to the secreted. It localises to the target cell membrane. Amphipathic alpha-helical antimicrobial peptide with weak to moderate activity against Gram-positive bacteria, and no activity against Gram-negative bacteria. Probably acts by disturbing membrane functions with its amphipathic structure. Strongly inhibits the formation of NO by neuronal nitric oxide synthase (nNOS) at micromolar concentrations. Acts by a non-competitive mechanism, probably by binding to calcium/calmodulin and as a consequence blocking calmodulin attachment to nNOS. This is Aurein-2.3 from Ranoidea aurea (Green and golden bell frog).